Consider the following 564-residue polypeptide: Septation ring formation regulator EzrA (564 aa).

The Extracellular portion of the chain corresponds to 1–4 (MVLY). The chain crosses the membrane as a helical span at residues 5–23 (IILAIIVIILIAVGVLFYL). Residues 24–564 (RSNKRQIIEK…KHIEEEVIKQ (541 aa)) lie on the Cytoplasmic side of the membrane. Coiled coils occupy residues 99-138 (SFNASQSEIDDANELMDSYEQSYQQQLEDVNEIIALYKDN), 190-223 (DGNYVQAHNHIAALNEQMKQLRSYMEEIPELIRE), 271-300 (LISRLELEEANDKLANINDKLDDMYDLIEH), 350-435 (VRQF…RRLL), and 471-550 (VKQL…ESVE).

This sequence belongs to the EzrA family.

Its subcellular location is the cell membrane. Functionally, negative regulator of FtsZ ring formation; modulates the frequency and position of FtsZ ring formation. Inhibits FtsZ ring formation at polar sites. Interacts either with FtsZ or with one of its binding partners to promote depolymerization. The sequence is that of Septation ring formation regulator EzrA from Staphylococcus aureus (strain Mu3 / ATCC 700698).